The chain runs to 296 residues: LysM and putative peptidoglycan-binding domain-containing protein 4 (296 aa).

The Extracellular portion of the chain corresponds to 1–217 (MRHKELLSKT…PMDGADCGIQ (217 aa)). Residue N30 is glycosylated (N-linked (GlcNAc...) asparagine). The LysM domain occupies 74–118 (LQRELAQEDSLNKLALQYGCKVADIKKVNNFIREQDLYALKSIKS). The chain crosses the membrane as a helical span at residues 218 to 238 (WWNAVFIMLLIGIVLPIFYLV). Topologically, residues 239–296 (YFKIQASGETPNSLNTAAIPNGSMAMGTVPGQAPRLAVAVPTVPSADSQFSQTTQAGN) are cytoplasmic.

Its subcellular location is the membrane. The protein is LysM and putative peptidoglycan-binding domain-containing protein 4 (LYSMD4) of Pongo abelii (Sumatran orangutan).